The primary structure comprises 404 residues: Cysteine desulfurase IscS (404 aa).

Pyridoxal 5'-phosphate contacts are provided by residues 75–76, N155, Q183, and 203–205; these read AT and SAH. K206 carries the post-translational modification N6-(pyridoxal phosphate)lysine. T243 provides a ligand contact to pyridoxal 5'-phosphate. The active-site Cysteine persulfide intermediate is C328. Residue C328 coordinates [2Fe-2S] cluster.

This sequence belongs to the class-V pyridoxal-phosphate-dependent aminotransferase family. NifS/IscS subfamily. As to quaternary structure, homodimer. Forms a heterotetramer with IscU, interacts with other sulfur acceptors. The cofactor is pyridoxal 5'-phosphate.

The protein localises to the cytoplasm. It catalyses the reaction (sulfur carrier)-H + L-cysteine = (sulfur carrier)-SH + L-alanine. The protein operates within cofactor biosynthesis; iron-sulfur cluster biosynthesis. Functionally, master enzyme that delivers sulfur to a number of partners involved in Fe-S cluster assembly, tRNA modification or cofactor biosynthesis. Catalyzes the removal of elemental sulfur atoms from cysteine to produce alanine. Functions as a sulfur delivery protein for Fe-S cluster synthesis onto IscU, an Fe-S scaffold assembly protein, as well as other S acceptor proteins. The chain is Cysteine desulfurase IscS from Shewanella piezotolerans (strain WP3 / JCM 13877).